We begin with the raw amino-acid sequence, 351 residues long: C-X-C chemokine receptor type 1 (351 aa).

The Extracellular segment spans residues 1 to 44; that stretch reads MAEAEYFIWTNPEGDFEKEFGNITGMLPTGDYFIPCKRVPITNR. An N-linked (GlcNAc...) asparagine glycan is attached at Asn22. A helical transmembrane segment spans residues 45-71; that stretch reads QALVVFYALVSLLSLLGNSLVMLVILY. The Cytoplasmic segment spans residues 72–80; sequence RRRTRSVMD. Residues 81–101 traverse the membrane as a helical segment; sequence VYVLNLAIADLLFSLTLPFLA. Residues 102-116 lie on the Extracellular side of the membrane; it reads VSKLKGWIFGTPLCK. A disulfide bridge links Cys115 with Cys192. Residues 117-138 form a helical membrane-spanning segment; the sequence is MVSLLKEFNFFSGILLLACISV. Over 139-159 the chain is Cytoplasmic; sequence DRYLAIVHATRTLARKRYLVK. Residues 160 to 179 form a helical membrane-spanning segment; it reads FVCVGIWGLSLILSLPFAIF. Topologically, residues 180 to 204 are extracellular; that stretch reads RQAYKPFRSGTVCYEVLGEATTDFR. The helical transmembrane segment at 205-225 threads the bilayer; sequence MTLRGLSHIFGFLLPLLTMLV. The Cytoplasmic portion of the chain corresponds to 226–247; sequence CYGLTLRMLFKTHMRQKHRAMG. A helical transmembrane segment spans residues 248 to 269; sequence VIFAVVLVFLLCCLPYNLVLLS. Residues 270–290 are Extracellular-facing; sequence DTLLGAHLIEDTCERRNDIDQ. The helical transmembrane segment at 291-313 threads the bilayer; the sequence is ALYITEILGFSHSCLNPIIYAFV. At 314 to 351 the chain is on the cytoplasmic side; it reads GQNFRHEFLKILANHGLVRKEVLTHRRVAFHTSLTAIY.

This sequence belongs to the G-protein coupled receptor 1 family. In terms of assembly, interacts with IL8. Interacts with GNAI2.

Its subcellular location is the cell membrane. In terms of biological role, receptor to interleukin-8, which is a powerful neutrophils chemotactic factor. Binding of IL-8 to the receptor causes activation of neutrophils. This response is mediated via a G-protein that activates a phosphatidylinositol-calcium second messenger system. The polypeptide is C-X-C chemokine receptor type 1 (Cxcr1) (Mus musculus (Mouse)).